The following is a 475-amino-acid chain: Homeobox even-skipped homolog protein 2 (475 aa).

Disordered regions lie at residues 82–113 (PSSE…AEAD) and 155–189 (TSAS…SGAD). Over residues 83-96 (SSESTVSSEIASAT) the composition is skewed to low complexity. A compositionally biased stretch (gly residues) spans 160 to 186 (SGLGSLHGGGGGGNSGAAALGGSGSGS). The segment at residues 191-250 (VRRYRTAFTREQIARLEKEFYRENYVSRPRRCELAAALNLPETTIKVWFQNRRMKDKRQR) is a DNA-binding region (homeobox).

This sequence belongs to the even-skipped homeobox family.

It localises to the nucleus. The chain is Homeobox even-skipped homolog protein 2 (Evx2) from Mus musculus (Mouse).